A 644-amino-acid polypeptide reads, in one-letter code: Leucine-rich repeat protein soc-2 homolog (644 aa).

The segment covering 1 to 19 (MNLCSSGATASTTSLSSTG) has biased composition (low complexity). Disordered regions lie at residues 1-60 (MNLC…APTL) and 82-150 (NSPA…IQAD). 2 stretches are compositionally biased toward gly residues: residues 26–50 (GVPG…GGKA) and 87–96 (GAGGASGFTG). Residues 99-117 (QQPTGSNGHSHLHNENNAN) are compositionally biased toward polar residues. LRR repeat units lie at residues 164–185 (GIKR…VKEC), 187–208 (HLTE…IGCL), 210–231 (SLRN…LQNC), 233–254 (QLKV…IYRL), 256–277 (SLTT…LRQL), 279–300 (NLTM…IGAL), 302–323 (NLTT…IGNC), 325–346 (NLSA…IGNL), 348–370 (SLVR…KNCK), 371–392 (SMDE…MLAS), 395–416 (GLTT…GPAQ), 419–440 (NVYS…IFSR), 443–464 (GLTK…IGTW), 466–487 (NMVE…IMNL), 489–510 (NLEI…IGNL), 512–533 (RLRI…IGLL), 535–556 (ELQR…IGHL), 558–579 (NLTH…IGSL), 581–603 (SLEN…LALC), and 605–626 (NLKY…IQAG).

Belongs to the SHOC2 family.

Functionally, acts as a Ras effector and participates in MAPK pathway activation. Probably acts as a regulatory subunit of protein phosphatase that specifically dephosphorylates Raf kinase and stimulate Raf activity at specialized signaling complexes upon Ras activation. The polypeptide is Leucine-rich repeat protein soc-2 homolog (Sur-8) (Drosophila erecta (Fruit fly)).